The sequence spans 245 residues: Protein FAM133B (245 aa).

2 disordered regions span residues 19-38 (SRGP…NRPR) and 69-245 (WKKE…SDSP). Positions 69-80 (WKKELEKHREKL) are enriched in basic and acidic residues. S82 carries the phosphoserine modification. Over residues 89–102 (KKRQKKKKEKKKSG) the composition is skewed to basic residues. Over residues 103–119 (RYSSSSSSSSDSSSSSS) the composition is skewed to low complexity. The span at 128-140 (QTKRRKKKKSHCH) shows a compositional bias: basic residues. Positions 165–176 (KDITEREKDTKG) are enriched in basic and acidic residues. 4 positions are modified to phosphoserine: S190, S191, S193, and S195. The segment covering 209 to 219 (SGEERERTTDK) has biased composition (basic and acidic residues). Residues 220–237 (AKKRRKHKKHSKKKKKKA) show a composition bias toward basic residues.

The protein belongs to the FAM133 family.

The sequence is that of Protein FAM133B (Fam133b) from Rattus norvegicus (Rat).